We begin with the raw amino-acid sequence, 426 residues long: 3-phosphoshikimate 1-carboxyvinyltransferase (426 aa).

3-phosphoshikimate-binding residues include Lys-22, Ser-23, and Arg-27. Lys-22 is a binding site for phosphoenolpyruvate. Residues Gly-96 and Arg-124 each coordinate phosphoenolpyruvate. The 3-phosphoshikimate site is built by Ser-170, Ser-171, Gln-172, Ser-198, Asp-314, Asn-337, and Lys-341. Gln-172 is a phosphoenolpyruvate binding site. Catalysis depends on Asp-314, which acts as the Proton acceptor. Phosphoenolpyruvate-binding residues include Arg-345, Arg-387, and Lys-412.

It belongs to the EPSP synthase family. Monomer.

The protein resides in the cytoplasm. It carries out the reaction 3-phosphoshikimate + phosphoenolpyruvate = 5-O-(1-carboxyvinyl)-3-phosphoshikimate + phosphate. It participates in metabolic intermediate biosynthesis; chorismate biosynthesis; chorismate from D-erythrose 4-phosphate and phosphoenolpyruvate: step 6/7. Its function is as follows. Catalyzes the transfer of the enolpyruvyl moiety of phosphoenolpyruvate (PEP) to the 5-hydroxyl of shikimate-3-phosphate (S3P) to produce enolpyruvyl shikimate-3-phosphate and inorganic phosphate. This Colwellia psychrerythraea (strain 34H / ATCC BAA-681) (Vibrio psychroerythus) protein is 3-phosphoshikimate 1-carboxyvinyltransferase.